A 264-amino-acid polypeptide reads, in one-letter code: 3-methyl-2-oxobutanoate hydroxymethyltransferase (264 aa).

Residues Asp-45 and Asp-84 each coordinate Mg(2+). Residues 45–46 (DS), Asp-84, and Lys-112 each bind 3-methyl-2-oxobutanoate. Glu-114 lines the Mg(2+) pocket. Glu-181 serves as the catalytic Proton acceptor.

Belongs to the PanB family. As to quaternary structure, homodecamer; pentamer of dimers. The cofactor is Mg(2+).

Its subcellular location is the cytoplasm. It carries out the reaction 3-methyl-2-oxobutanoate + (6R)-5,10-methylene-5,6,7,8-tetrahydrofolate + H2O = 2-dehydropantoate + (6S)-5,6,7,8-tetrahydrofolate. It participates in cofactor biosynthesis; (R)-pantothenate biosynthesis; (R)-pantoate from 3-methyl-2-oxobutanoate: step 1/2. Its function is as follows. Catalyzes the reversible reaction in which hydroxymethyl group from 5,10-methylenetetrahydrofolate is transferred onto alpha-ketoisovalerate to form ketopantoate. The polypeptide is 3-methyl-2-oxobutanoate hydroxymethyltransferase (Vibrio cholerae serotype O1 (strain ATCC 39541 / Classical Ogawa 395 / O395)).